The primary structure comprises 292 residues: Inositol oxygenase (292 aa).

Substrate-binding positions include R33 and 88-90 (DES). Fe cation contacts are provided by H101, H128, and D129. Residues K132 and 149-150 (GD) contribute to the substrate site. H201, H227, and D260 together coordinate Fe cation. 227–228 (HS) provides a ligand contact to substrate.

It belongs to the myo-inositol oxygenase family. The cofactor is Fe cation.

It is found in the cytoplasm. It catalyses the reaction myo-inositol + O2 = D-glucuronate + H2O + H(+). It participates in polyol metabolism; myo-inositol degradation into D-glucuronate; D-glucuronate from myo-inositol: step 1/1. In Dictyostelium discoideum (Social amoeba), this protein is Inositol oxygenase (miox).